The following is a 283-amino-acid chain: Polyamine aminopropyltransferase (283 aa).

The PABS domain maps to 5–241 (NNWYIEHFER…GWWSVTMARK (237 aa)). Gln35 lines the S-methyl-5'-thioadenosine pocket. Residues His66 and Asp90 each coordinate spermidine. S-methyl-5'-thioadenosine is bound by residues Asp110 and 141–142 (DG). Asp160 acts as the Proton acceptor in catalysis. 160-163 (DSTD) contributes to the spermidine binding site. Pro167 contacts S-methyl-5'-thioadenosine.

Belongs to the spermidine/spermine synthase family. In terms of assembly, homodimer or homotetramer.

Its subcellular location is the cytoplasm. The enzyme catalyses S-adenosyl 3-(methylsulfanyl)propylamine + putrescine = S-methyl-5'-thioadenosine + spermidine + H(+). It functions in the pathway amine and polyamine biosynthesis; spermidine biosynthesis; spermidine from putrescine: step 1/1. Functionally, catalyzes the irreversible transfer of a propylamine group from the amino donor S-adenosylmethioninamine (decarboxy-AdoMet) to putrescine (1,4-diaminobutane) to yield spermidine. The protein is Polyamine aminopropyltransferase of Stenotrophomonas maltophilia (strain K279a).